A 264-amino-acid polypeptide reads, in one-letter code: Thymidylate synthase (264 aa).

Arg21 provides a ligand contact to dUMP. A (6R)-5,10-methylene-5,6,7,8-tetrahydrofolate-binding site is contributed by His51. A dUMP-binding site is contributed by 126–127; it reads RR. Cys146 acts as the Nucleophile in catalysis. Residues 166 to 169, Asn177, and 207 to 209 each bind dUMP; these read RSCD and HLY. Asp169 provides a ligand contact to (6R)-5,10-methylene-5,6,7,8-tetrahydrofolate. Ala263 is a (6R)-5,10-methylene-5,6,7,8-tetrahydrofolate binding site.

This sequence belongs to the thymidylate synthase family. Bacterial-type ThyA subfamily. In terms of assembly, homodimer.

Its subcellular location is the cytoplasm. The enzyme catalyses dUMP + (6R)-5,10-methylene-5,6,7,8-tetrahydrofolate = 7,8-dihydrofolate + dTMP. It participates in pyrimidine metabolism; dTTP biosynthesis. Functionally, catalyzes the reductive methylation of 2'-deoxyuridine-5'-monophosphate (dUMP) to 2'-deoxythymidine-5'-monophosphate (dTMP) while utilizing 5,10-methylenetetrahydrofolate (mTHF) as the methyl donor and reductant in the reaction, yielding dihydrofolate (DHF) as a by-product. This enzymatic reaction provides an intracellular de novo source of dTMP, an essential precursor for DNA biosynthesis. In Klebsiella pneumoniae subsp. pneumoniae (strain ATCC 700721 / MGH 78578), this protein is Thymidylate synthase.